The chain runs to 96 residues: Large ribosomal subunit protein uL23 (96 aa).

It belongs to the universal ribosomal protein uL23 family. In terms of assembly, part of the 50S ribosomal subunit. Contacts protein L29, and trigger factor when it is bound to the ribosome.

Functionally, one of the early assembly proteins it binds 23S rRNA. One of the proteins that surrounds the polypeptide exit tunnel on the outside of the ribosome. Forms the main docking site for trigger factor binding to the ribosome. This Enterococcus faecalis (strain ATCC 700802 / V583) protein is Large ribosomal subunit protein uL23.